A 380-amino-acid chain; its full sequence is Cytochrome b (380 aa).

The next 4 helical transmembrane spans lie at 34–54 (FGSLLAMCLITQILTGLLLAM), 78–99 (WLIRNLHANGASFFFICIFLHI), 114–134 (WNTGVILLLTLMATAFVGYVL), and 179–199 (FFALHFLLPFLIAGITIIHLT). 2 residues coordinate heme b: His84 and His98. 2 residues coordinate heme b: His183 and His197. His202 serves as a coordination point for a ubiquinone. 4 helical membrane passes run 227–247 (IKDILGLTLMLTPFLTLALFS), 289–309 (LGGVLALAASVLILLLIPFLH), 321–341 (LSQTLFWLLVANLLILTWIGS), and 348–368 (FIIIGQMASLSYFTILLILFP).

It belongs to the cytochrome b family. As to quaternary structure, the cytochrome bc1 complex contains 11 subunits: 3 respiratory subunits (MT-CYB, CYC1 and UQCRFS1), 2 core proteins (UQCRC1 and UQCRC2) and 6 low-molecular weight proteins (UQCRH/QCR6, UQCRB/QCR7, UQCRQ/QCR8, UQCR10/QCR9, UQCR11/QCR10 and a cleavage product of UQCRFS1). This cytochrome bc1 complex then forms a dimer. Requires heme b as cofactor.

It is found in the mitochondrion inner membrane. Its function is as follows. Component of the ubiquinol-cytochrome c reductase complex (complex III or cytochrome b-c1 complex) that is part of the mitochondrial respiratory chain. The b-c1 complex mediates electron transfer from ubiquinol to cytochrome c. Contributes to the generation of a proton gradient across the mitochondrial membrane that is then used for ATP synthesis. In Coturnix japonica (Japanese quail), this protein is Cytochrome b (MT-CYB).